Here is a 260-residue protein sequence, read N- to C-terminus: Global transcriptional regulator CodY (260 aa).

The interval 1–159 (MPNLLEKTRK…SSTVVGIQLL (159 aa)) is GAF domain. Positions 207 to 226 (ASVIADRIGITRSVIVNALR) form a DNA-binding region, H-T-H motif.

The protein belongs to the CodY family.

Its subcellular location is the cytoplasm. In terms of biological role, DNA-binding global transcriptional regulator which is involved in the adaptive response to starvation and acts by directly or indirectly controlling the expression of numerous genes in response to nutrient availability. During rapid exponential growth, CodY is highly active and represses genes whose products allow adaptation to nutrient depletion. This is Global transcriptional regulator CodY from Streptococcus uberis (strain ATCC BAA-854 / 0140J).